A 199-amino-acid polypeptide reads, in one-letter code: Recombination protein RecR (199 aa).

The segment at 56–71 adopts a C4-type zinc-finger fold; the sequence is CQQCNNYTEQTLCALC. In terms of domain architecture, Toprim spans 79–174; sequence TLLCVVESPA…NISQLAHGIP (96 aa).

It belongs to the RecR family.

Functionally, may play a role in DNA repair. It seems to be involved in an RecBC-independent recombinational process of DNA repair. It may act with RecF and RecO. This is Recombination protein RecR from Legionella pneumophila subsp. pneumophila (strain Philadelphia 1 / ATCC 33152 / DSM 7513).